We begin with the raw amino-acid sequence, 285 residues long: MAGLSHPSVFGRATHAVVRAPPESLCRHALRRSQGEEVDFARAERQHQLYVGVLGSKLGLQVVQLPADESLPDCVFVEDVAVVCEETALITRPGAPSRRKEVDMMKEALEKLQLNIVEMKDENATLDGGDVLFTGREFFVGLSKRTNQRGAEILADTFKDYAVSTVPVADSLHLKSFCSMAGPNLIAIGSSESAQKALKIMQQMSDHRYDKLTVPDDMAANCIYLNIPSKGHVLLHRTPEEYPESAKVYEKLKDHLLIPVSNSEMEKVDGLLTCCSVFINKKTDS.

An N-acetylalanine modification is found at Ala-2. Position 30 (Leu-30) interacts with substrate. Ser-33 carries the post-translational modification Phosphoserine. Positions 73, 78, 79, 98, and 145 each coordinate substrate. The active-site Proton donor is the His-173. The residue at position 222 (Cys-222) is an S-nitrosocysteine. Val-268 contributes to the substrate binding site. At Cys-274 the chain carries S-nitrosocysteine. The active-site Nucleophile is the Cys-274. Cys-274 serves as a coordination point for Zn(2+).

The protein belongs to the DDAH family. In terms of assembly, monomer. In terms of tissue distribution, detected in red blood cells (at protein level). Widely distributed, high amounts found in kidney, brain, aorta and pancreas.

The enzyme catalyses N(omega),N(omega)-dimethyl-L-arginine + H2O = dimethylamine + L-citrulline. The catalysed reaction is N(omega)-methyl-L-arginine + H2O = L-citrulline + methylamine. Its activity is regulated as follows. Inhibited by zinc ions. Its function is as follows. Hydrolyzes N(G),N(G)-dimethyl-L-arginine (ADMA) and N(G)-monomethyl-L-arginine (MMA) which act as inhibitors of NOS. Has therefore a role in the regulation of nitric oxide generation. In Rattus norvegicus (Rat), this protein is N(G),N(G)-dimethylarginine dimethylaminohydrolase 1 (Ddah1).